The chain runs to 307 residues: Potassium channel subfamily K member 7 (307 aa).

Residues 1–10 are Cytoplasmic-facing; that stretch reads MGSLKPWARY. Residues 11 to 31 traverse the membrane as a helical segment; that stretch reads LLLLMAHLLAMGLGAVVLQAL. Asn-83 carries N-linked (GlcNAc...) asparagine glycosylation. The pore-forming intramembrane region spans 92–118; that stretch reads LPSALLFTASILTTTGYGHMAPLSSGG. A helical transmembrane segment spans residues 120–140; it reads AFCVVYAALGLPASLALVAAL. The Cytoplasmic segment spans residues 141-172; the sequence is RHCLLPVFSRPGDWVAIRWQLAPAQAALLQAA. The chain crosses the membrane as a helical span at residues 173–193; it reads GLGLLVACVFMLLPALVLWGV. An intramembrane region (pore-forming) is located at residues 199–227; that stretch reads LLEAIYFCFGSLSTIGLGDLLPAHGRGLH. The chain crosses the membrane as a helical span at residues 233–253; sequence LGQFALLGYLLLGLLAMLLAV. The Cytoplasmic portion of the chain corresponds to 254-307; it reads ETFSELPQVRAMVKFFGPSGSRTDEDQDGILGQDELALSTVLPDAPVLGPTTPA.

Belongs to the two pore domain potassium channel (TC 1.A.1.8) family. In terms of assembly, homodimer. As to expression, detected in embryo, eye, lung and liver. Weakly expressed in colon, testis, atria, kidney, intestine, bladder, uterus, ovary, salivary gland, thymus and brain stem. Not detected in brain, cerebellum, spinal cord, heart, ventricle, skeletal muscle, liver, placenta and pancreas. In the eye, highly expressed in the retinal ganglion cell layer and inner nuclear layer.

It localises to the membrane. Functionally, probable potassium channel subunit. No channel activity observed in vitro as protein remains in the endoplasmic reticulum. May need to associate with an as yet unknown partner in order to reach the plasma membrane. In Mus musculus (Mouse), this protein is Potassium channel subfamily K member 7 (Kcnk7).